The following is a 165-amino-acid chain: Adenosine 5'-monophosphoramidase HINT3 (165 aa).

Positions 1–23 (MAEKQAGLVGEPDPEGSSPGTSE) are disordered. Alanine 2 bears the N-acetylalanine mark. One can recognise an HIT domain in the interval 32-143 (VFCRVAAGQE…PVKEFGFLSK (112 aa)). AMP contacts are provided by residues 59–60 (DI) and 128–130 (HLH). The short motif at 126 to 130 (HLHLH) is the Histidine triad motif element. Histidine 128 acts as the Tele-AMP-histidine intermediate in catalysis.

Belongs to the HINT family. Forms dimers to octamers and even larger oligomer. Interacts with CALM1.

It is found in the cytoplasm. Its subcellular location is the nucleus. It catalyses the reaction adenosine 5'-phosphoramidate + H2O = AMP + NH4(+). Functionally, exhibits adenosine 5'-monophosphoramidase activity, hydrolyzing purine nucleotide phosphoramidates with a single phosphate group such as adenosine 5'monophosphoramidate (AMP-NH2) to yield AMP and NH2. Hydrolyzes lysyl-AMP (AMP-N-epsilon-(N-alpha-acetyl lysine methyl ester)) generated by lysine tRNA ligase. The chain is Adenosine 5'-monophosphoramidase HINT3 (Hint3) from Mus musculus (Mouse).